Here is a 280-residue protein sequence, read N- to C-terminus: Eukaryotic translation initiation factor 3 subunit F-1 (280 aa).

In terms of domain architecture, MPN spans 8 to 138; it reads VRVHPVVLFQ…LRAYVCIQLG (131 aa).

It belongs to the eIF-3 subunit F family. Component of the eukaryotic translation initiation factor 3 (eIF-3) complex. The eIF-3 complex interacts with pix.

The protein resides in the cytoplasm. Its function is as follows. Component of the eukaryotic translation initiation factor 3 (eIF-3) complex, which is involved in protein synthesis of a specialized repertoire of mRNAs and, together with other initiation factors, stimulates binding of mRNA and methionyl-tRNAi to the 40S ribosome. The eIF-3 complex specifically targets and initiates translation of a subset of mRNAs involved in cell proliferation. The sequence is that of Eukaryotic translation initiation factor 3 subunit F-1 from Drosophila erecta (Fruit fly).